The sequence spans 699 residues: SPS-sensor serine protease component SSY5 (699 aa).

2 disordered regions span residues 1 to 113 (MVRF…LQGF) and 128 to 158 (PVKE…ENAR). The propeptide occupies 1–381 (MVRFFGLNKK…YCVKDYIKKA (381 aa)). Residues 24–38 (NEQNAAETSSSNVSG) are compositionally biased toward polar residues. Residues 39–51 (NEERIDPNSHDTN) show a composition bias toward basic and acidic residues. Over residues 61 to 78 (STTFGSSIQSSSIFSRGR) the composition is skewed to low complexity. Polar residues predominate over residues 83 to 93 (TGASSSMATSE). Low complexity-rich tracts occupy residues 97–109 (HSSG…NSKN) and 144–154 (SSSTSSTLATS). The segment at 459 to 699 (FAITCAHVVL…QWDIDPQLDG (241 aa)) is serine protease. Active-site charge relay system residues include His465, Asp545, and Ser640.

This sequence belongs to the peptidase S64 family. As to quaternary structure, component of the plasma membrane SPS (SSY1-PTR3-SSY5) amino acid sensor complex. Post-translationally, the propeptide is autoproteolytically cleaved from the catalytic domain but remains associated, forming an inactive protease complex. This processing occurs even in the absence of signaling.

The protein resides in the cell membrane. Functionally, protease component of the SPS-sensor system, which regulates the expression of several amino acid-metabolizing enzymes and amino acid- and peptide-permeases in response to extracellular amino acid levels by controlling the activity of two transcription factors, STP1 and STP2. Catalyzes the activation of these transcription factors, which are synthesized as latent cytoplasmic precursors, by proteolytic removal of an N-terminal inhibitory domain containing cytoplasmic retention motifs. SSY5 binds as an inactive protease complex to STP1. In response to extracellular amino acids and dependent on the other SPS-sensor components, the inhibitory propeptide is induced to dissociate, and thereby enables the catalytic domain to process STP1. This Saccharomyces cerevisiae (strain ATCC 204508 / S288c) (Baker's yeast) protein is SPS-sensor serine protease component SSY5 (SSY5).